Consider the following 269-residue polypeptide: Aquaporin-1 (269 aa).

The Cytoplasmic segment spans residues 1–11 (MASEFKKKLFW). The helical transmembrane segment at 12–29 (RAVVAEFLAMTLFVFISI) threads the bilayer. The Extracellular portion of the chain corresponds to 30–46 (GSALGFKYPVGNNQTAV). Asn-42 carries N-linked (GlcNAc...) asparagine glycosylation. The chain crosses the membrane as a helical span at residues 47 to 65 (QDNVKVSLAFGLSIATLAQ). Over 66-68 (SVG) the chain is Cytoplasmic. Residues 69 to 82 (HISGAHLNPAVTLG) lie within the membrane without spanning it. Positions 76 to 78 (NPA) match the NPA 1 motif. Residues 83 to 90 (LLLSCQIS) are Cytoplasmic-facing. Residues 91 to 109 (IFRALMYIIAQCVGAIVAT) traverse the membrane as a helical segment. Over 110–133 (AILSGITSSLPGNSLGRNDLADGV) the chain is Extracellular. Residues 134 to 153 (NSGQGLGIEIIGTLQLVLCV) traverse the membrane as a helical segment. Topologically, residues 154–163 (LATTDRRRRD) are cytoplasmic. A helical transmembrane segment spans residues 164-181 (LGGSAPLAIGLSVALGHL). Topologically, residues 182–186 (LAIDY) are extracellular. The stretch at 187 to 199 (TGCGINPARSFGS) is an intramembrane region. The short motif at 192–194 (NPA) is the NPA 2 element. Residues 200–206 (AVITHNF) lie on the Extracellular side of the membrane. N-linked (GlcNAc...) asparagine glycosylation occurs at Asn-205. The chain crosses the membrane as a helical span at residues 207 to 224 (SNHWIFWVGPFIGGALAV). Over 225–269 (LIYDFILAPRSSDFTDRVKVWTSGQVEEYDLDADDINSRVEMKPK) the chain is Cytoplasmic. Position 247 is a phosphoserine (Ser-247). Residue Tyr-253 is modified to Phosphotyrosine. Position 262 is a phosphoserine (Ser-262).

This sequence belongs to the MIP/aquaporin (TC 1.A.8) family. Homotetramer; each monomer provides an independent water pore. Component of the ankyrin-1 complex in the erythrocyte, composed of ANK1, RHCE, RHAG, SLC4A1, EPB42, GYPA, GYPB and AQP1. Interacts with EPHB2; involved in endolymph production in the inner ear. Identified in a complex with STOM. Interacts (via the N-terminal) with ANK1 (via ANK 1-5 repeats). Interacts (via the C-terminal) with EPB42.

It localises to the cell membrane. The enzyme catalyses H2O(in) = H2O(out). It catalyses the reaction nitric oxide(out) = nitric oxide(in). It carries out the reaction CO2(out) = CO2(in). The catalysed reaction is glycerol(in) = glycerol(out). The enzyme catalyses H2O2(out) = H2O2(in). It catalyses the reaction K(+)(in) = K(+)(out). It carries out the reaction Na(+)(in) = Na(+)(out). Functionally, forms a water channel that facilitates the transport of water across cell membranes, playing a crucial role in water homeostasis in various tissues. Could also be permeable to small solutes including hydrogen peroxide, glycerol and gases such as amonnia (NH3), nitric oxide (NO) and carbon dioxide (CO2). Recruited to the ankyrin-1 complex, a multiprotein complex of the erythrocyte membrane, it could be part of a CO2 metabolon, linking facilitated diffusion of CO2 across the membrane, anion exchange of Cl(-)/HCO3(-) and interconversion of dissolved CO2 and carbonic acid in the cytosol. In vitro, it shows non-selective gated cation channel activity and may be permeable to cations like K(+) and Na(+) in vivo. This Pongo abelii (Sumatran orangutan) protein is Aquaporin-1.